The chain runs to 373 residues: Lipoyl amidotransferase LIPT1, mitochondrial (373 aa).

A mitochondrion-targeting transit peptide spans M1–K25. Residues L57–N243 form the BPL/LPL catalytic domain. Positions 107, 151, 161, and 179 each coordinate (R)-lipoyl-5'-AMP.

The protein belongs to the LplA family. Highly expressed in skeletal muscle and heart, moderately in kidney and pancreas, and detected at lower levels in liver, brain, placenta and lung.

Its subcellular location is the mitochondrion. The enzyme catalyses N(6)-[(R)-lipoyl]-L-lysyl-[glycine-cleavage complex H protein] + L-lysyl-[lipoyl-carrier protein] = L-lysyl-[glycine-cleavage complex H protein] + N(6)-[(R)-lipoyl]-L-lysyl-[lipoyl-carrier protein]. It catalyses the reaction (R)-lipoyl-5'-AMP + L-lysyl-[lipoyl-carrier protein] = N(6)-[(R)-lipoyl]-L-lysyl-[lipoyl-carrier protein] + AMP + 2 H(+). The protein operates within protein modification; protein lipoylation via exogenous pathway; protein N(6)-(lipoyl)lysine from lipoate: step 2/2. In terms of biological role, lipoyl amidotransferase that catalyzes the transfer of lipoyl moieties from lipoyl-protein H of the glycine cleavage system (lipoyl-GCSH) to E2 subunits of the pyruvate dehydrogenase complex (PDCE2). Unable to catalyze the transfer of octanoyl from octanoyl-GCSH to PDCE2. In vitro, it is also able to catalyze the transfer of the lipoyl group from lipoyl-AMP to the specific lysine residue of lipoyl domains of lipoate-dependent enzymes but this reaction may not be physiologically relevant. The protein is Lipoyl amidotransferase LIPT1, mitochondrial of Homo sapiens (Human).